Reading from the N-terminus, the 355-residue chain is Peptide chain release factor 1 (355 aa).

At Q232 the chain carries N5-methylglutamine.

It belongs to the prokaryotic/mitochondrial release factor family. Methylated by PrmC. Methylation increases the termination efficiency of RF1.

Its subcellular location is the cytoplasm. Peptide chain release factor 1 directs the termination of translation in response to the peptide chain termination codons UAG and UAA. This Kineococcus radiotolerans (strain ATCC BAA-149 / DSM 14245 / SRS30216) protein is Peptide chain release factor 1.